Consider the following 327-residue polypeptide: Serine/threonine-protein phosphatase 4 regulatory subunit ppfr-4 (327 aa).

Residues 141–185 are a coiled coil; the sequence is KLAVEEIRRLKLERHKKKQELKMAELRIQKQLEAVSIDEQNLREL. Positions 271–327 are disordered; it reads KFGHNPQNAPQSSAPAGAEAQESEEEVDDDEARAKAMRWDEYKDDHRRGWGNMHNKG. Over residues 275–284 the composition is skewed to polar residues; the sequence is NPQNAPQSSA. Residues 291–301 show a composition bias toward acidic residues; it reads QESEEEVDDDE. Over residues 302 to 318 the composition is skewed to basic and acidic residues; it reads ARAKAMRWDEYKDDHRR.

Serine/threonine-protein phosphatase 4 (PP4) occurs in different assemblies of the catalytic and one or more regulatory subunits. The catalytic subunit is likely to be pph-4.1.

Functionally, probable regulatory subunit of serine/threonine-protein phosphatase PP4 which may play a role in meiosis and embryonic mitosis. Probably in association with catalytic subunit pph-4.1, regulates microtubule severing during oocyte meiosis II by dephosphorylating and likely activating mei-1, a component of the katanin microtubule severing complex. The protein is Serine/threonine-protein phosphatase 4 regulatory subunit ppfr-4 of Caenorhabditis elegans.